A 160-amino-acid polypeptide reads, in one-letter code: Ureidoglycolate lyase (160 aa).

It belongs to the ureidoglycolate lyase family. In terms of assembly, homodimer. Ni(2+) serves as cofactor.

It carries out the reaction (S)-ureidoglycolate = urea + glyoxylate. It participates in nitrogen metabolism; (S)-allantoin degradation. Functionally, catalyzes the catabolism of the allantoin degradation intermediate (S)-ureidoglycolate, generating urea and glyoxylate. Involved in the utilization of allantoin as nitrogen source. This Salmonella gallinarum (strain 287/91 / NCTC 13346) protein is Ureidoglycolate lyase.